Consider the following 245-residue polypeptide: Purine nucleoside phosphorylase (245 aa).

His8 is an a purine D-ribonucleoside binding site. Residues 24 to 28 (GDPGR), Arg46, and 89 to 92 (RAGS) each bind phosphate. 184 to 185 (ME) serves as a coordination point for a purine D-ribonucleoside. Catalysis depends on Asp207, which acts as the Proton donor.

The protein belongs to the PNP/MTAP phosphorylase family. As to quaternary structure, homohexamer; trimer of homodimers.

The catalysed reaction is inosine + phosphate = alpha-D-ribose 1-phosphate + hypoxanthine. It catalyses the reaction guanosine + phosphate = alpha-D-ribose 1-phosphate + guanine. It carries out the reaction 2'-deoxyguanosine + phosphate = 2-deoxy-alpha-D-ribose 1-phosphate + guanine. The enzyme catalyses 2'-deoxyinosine + phosphate = 2-deoxy-alpha-D-ribose 1-phosphate + hypoxanthine. Its pathway is purine metabolism; purine nucleoside salvage. In terms of biological role, as part of the purine salvage pathway, catalyzes the phosphorolytic breakdown of the N-glycosidic bond in the beta-(deoxy)ribonucleoside molecules, with the formation of the corresponding free purine bases and pentose-1-phosphate. Preferentially acts on inosine and guanosine, and to a lesser extent on 2'-deoxyinosine and 2'-deoxyguanosine. The protein is Purine nucleoside phosphorylase of Plasmodium vivax (strain Salvador I).